A 313-amino-acid chain; its full sequence is Ester hydrolase C11orf54 homolog (313 aa).

H264, H266, and H276 together coordinate Zn(2+).

In terms of assembly, monomer. Zn(2+) serves as cofactor.

It is found in the nucleus. The protein localises to the cytoplasm. In terms of biological role, exhibits ester hydrolase activity on the substrate p-nitrophenyl acetate, in vitro. May regulate DNA damage and repair by regulating HIF1A degradation via chaperone-mediated autophagy (CMA). This chain is Ester hydrolase C11orf54 homolog, found in Xenopus tropicalis (Western clawed frog).